The primary structure comprises 187 residues: MEVEEIYKHQEVKMQAPAFRDKKQGVSAKNQGAHDPDYENITLAFKNQDHAKGGHSRPTSQVPAQCRPPSDSTQVPCWLYRAILSLYILLALAFVLCIILSAFIMVKNAEMSKELLGFKRELWNVSNSVQACEERQKRGWDSVQQSITMVRSKIDRLETTLAGIKNIDTKVQKILEVLQKMPQSSPQ.

Residues Met-1–Ser-85 lie on the Cytoplasmic side of the membrane. The interval Asp-49–Asp-71 is disordered. A helical; Signal-anchor for type II membrane protein membrane pass occupies residues Leu-86–Val-106. Over Lys-107 to Gln-187 the chain is Extracellular. The N-linked (GlcNAc...) asparagine glycan is linked to Asn-124.

As to expression, expressed specifically in mast cells. Found primarily in lung.

The protein localises to the membrane. The protein is Mast cell-expressed membrane protein 1 of Homo sapiens (Human).